The following is a 452-amino-acid chain: Probable ECA polymerase (452 aa).

11 consecutive transmembrane segments (helical) span residues 6–26 (FSGL…LTWF), 37–57 (VFFS…TSVL), 63–83 (VGVA…CFYG), 118–138 (VILM…NGFL), 155–175 (GVAL…VYFL), 181–201 (AWLF…MIVG), 207–227 (IIIA…ISLW), 228–248 (MLAA…LKRY), 341–361 (LVVM…GMII), 378–398 (YKAA…IVLA), and 410–430 (VFFL…FWLF).

The protein belongs to the WzyE family. As to quaternary structure, probably part of a complex composed of WzxE, WzyE and WzzE.

The protein resides in the cell inner membrane. It functions in the pathway bacterial outer membrane biogenesis; enterobacterial common antigen biosynthesis. In terms of biological role, probably involved in the polymerization of enterobacterial common antigen (ECA) trisaccharide repeat units. The chain is Probable ECA polymerase from Salmonella newport (strain SL254).